An 882-amino-acid chain; its full sequence is DNA mismatch repair protein MutS (882 aa).

627–634 (GPNMAGKS) contributes to the ATP binding site.

Belongs to the DNA mismatch repair MutS family.

This protein is involved in the repair of mismatches in DNA. It is possible that it carries out the mismatch recognition step. This protein has a weak ATPase activity. The chain is DNA mismatch repair protein MutS from Anaeromyxobacter dehalogenans (strain 2CP-1 / ATCC BAA-258).